The chain runs to 370 residues: Arginine kinase (370 aa).

The 84-residue stretch at 6–89 folds into the Phosphagen kinase N-terminal domain; it reads QKKYPAKDDF…FDPVIEEYHN (84 aa). Positions 115 to 358 constitute a Phosphagen kinase C-terminal domain; that stretch reads YVISSRVRTG…KVLIEMEKKL (244 aa). ATP contacts are provided by residues 118–122 and histidine 181; that span reads SSRVR. Substrate is bound at residue glutamate 222. Arginine 226 contributes to the ATP binding site. Cysteine 274 is a binding site for substrate. ATP contacts are provided by residues 283–287 and 311–316; these read RCSVH and RGTSGE. Substrate is bound at residue glutamate 316.

It belongs to the ATP:guanido phosphotransferase family. As to quaternary structure, homodimer. Post-translationally, the N-terminus is blocked.

The enzyme catalyses L-arginine + ATP = N(omega)-phospho-L-arginine + ADP + H(+). The polypeptide is Arginine kinase (AK) (Stichopus japonicus (Sea cucumber)).